A 1403-amino-acid polypeptide reads, in one-letter code: Baculoviral IAP repeat-containing protein 1f (1403 aa).

3 BIR repeats span residues 60 to 127 (EAKR…CEFL), 159 to 227 (EEAR…CEFL), and 278 to 345 (EELR…CVFL). Residues cysteine 315, cysteine 318, histidine 335, and cysteine 342 each coordinate Zn(2+). The NACHT domain occupies 464–759 (SVMCVEGEAG…EFLAAVRLTE (296 aa)). Residue 473-478 (GSGKTT) participates in ATP binding.

As to quaternary structure, component of the NLRC4 inflammasome, at least composed of NLRC4, caspase-1 (CASP1) and some NAIP protein. (Microbial infection) Interacts with S.typhimurium (Salmonella) flagellin.

In terms of biological role, sensor component of the NLRC4 inflammasome that specifically recognizes and binds flagellin from pathogenic bacteria. Association of pathogenic bacteria proteins drives in turn drive assembly and activation of the NLRC4 inflammasome, promoting caspase-1 activation, cytokine production and macrophage pyroptosis. The NLRC4 inflammasome is activated as part of the innate immune response to a range of intracellular bacteria. The NLRC4 inflammasome senses Gram-negative bacteria such as L.pneumophila and P.aeruginosa, enteric pathogens S.typhimurium (Salmonella) and S.flexneri. May contribute to prevent motor-neuron apoptosis induced by a variety of signals. The sequence is that of Baculoviral IAP repeat-containing protein 1f (Naip6) from Mus musculus (Mouse).